Consider the following 253-residue polypeptide: Ribonuclease 3 (253 aa).

The RNase III domain maps to 29-157 (VDELQKTIGH…MLGAVFLDAG (129 aa)). Residue Glu-70 participates in Mg(2+) binding. Asp-74 is a catalytic residue. Mg(2+)-binding residues include Asp-143 and Glu-146. Glu-146 is a catalytic residue. Positions 184–253 (DYKSQLQELT…AARAVATLDK (70 aa)) constitute a DRBM domain.

This sequence belongs to the ribonuclease III family. As to quaternary structure, homodimer. It depends on Mg(2+) as a cofactor.

Its subcellular location is the cytoplasm. The catalysed reaction is Endonucleolytic cleavage to 5'-phosphomonoester.. Its function is as follows. Digests double-stranded RNA. Involved in the processing of primary rRNA transcript to yield the immediate precursors to the large and small rRNAs (23S and 16S). Processes some mRNAs, and tRNAs when they are encoded in the rRNA operon. Processes pre-crRNA and tracrRNA of type II CRISPR loci if present in the organism. This chain is Ribonuclease 3, found in Nitratidesulfovibrio vulgaris (strain ATCC 29579 / DSM 644 / CCUG 34227 / NCIMB 8303 / VKM B-1760 / Hildenborough) (Desulfovibrio vulgaris).